The sequence spans 61 residues: Protein SspF (61 aa).

Belongs to the alpha/beta-type SASP family.

In terms of biological role, may play some important role in either sporulation or the dormant spore. The sequence is that of Protein SspF (sspF) from Bacillus subtilis (strain 168).